We begin with the raw amino-acid sequence, 497 residues long: Probable malate:quinone oxidoreductase (497 aa).

This sequence belongs to the MQO family. FAD is required as a cofactor.

The catalysed reaction is (S)-malate + a quinone = a quinol + oxaloacetate. Its pathway is carbohydrate metabolism; tricarboxylic acid cycle; oxaloacetate from (S)-malate (quinone route): step 1/1. The protein is Probable malate:quinone oxidoreductase of Bacillus cereus (strain ATCC 14579 / DSM 31 / CCUG 7414 / JCM 2152 / NBRC 15305 / NCIMB 9373 / NCTC 2599 / NRRL B-3711).